We begin with the raw amino-acid sequence, 449 residues long: NADH-quinone oxidoreductase subunit H (449 aa).

A run of 9 helical transmembrane segments spans residues 29 to 49, 96 to 116, 136 to 156, 177 to 197, 211 to 231, 259 to 279, 298 to 318, 330 to 350, and 365 to 385; these read ILLKAVAVFAFLLLMTLFAIV, PIFILAPIVSAVPAFLAFAVI, LPVSVLYLLAAASLGVYGLIL, IISYEVAMGLAFVAVFIYAGT, WYIVLVPSFVLYCISMVGETN, FFFLAEYINMVTVSAIATTLF, WVPLIWFVLKLLAFLFFFIWL, FMSFGWKVLIPVGLVWVLAVA, and WLVGFGVVVGILLIVALIDPG. Positions 393–402 are enriched in basic and acidic residues; sequence LEEAEQRKLA. A disordered region spans residues 393-449; the sequence is LEEAEQRKLAEAPSLDRIPWPPPPQAAGRGRPAVSAGASANGSSTVIPADPGPRQER. Positions 418–436 are enriched in low complexity; that stretch reads AAGRGRPAVSAGASANGSS.

The protein belongs to the complex I subunit 1 family. In terms of assembly, NDH-1 is composed of 14 different subunits. Subunits NuoA, H, J, K, L, M, N constitute the membrane sector of the complex.

The protein localises to the cell membrane. It carries out the reaction a quinone + NADH + 5 H(+)(in) = a quinol + NAD(+) + 4 H(+)(out). Its function is as follows. NDH-1 shuttles electrons from NADH, via FMN and iron-sulfur (Fe-S) centers, to quinones in the respiratory chain. The immediate electron acceptor for the enzyme in this species is believed to be ubiquinone. Couples the redox reaction to proton translocation (for every two electrons transferred, four hydrogen ions are translocated across the cytoplasmic membrane), and thus conserves the redox energy in a proton gradient. This subunit may bind ubiquinone. This chain is NADH-quinone oxidoreductase subunit H, found in Frankia casuarinae (strain DSM 45818 / CECT 9043 / HFP020203 / CcI3).